We begin with the raw amino-acid sequence, 607 residues long: Fatty acid amide hydrolase (607 aa).

Residues K204 and S280 each act as charge relay system in the active site. 301 to 304 (GGGS) serves as a coordination point for substrate. S304 serves as the catalytic Acyl-ester intermediate.

It belongs to the amidase family. Forms homodimers.

It is found in the endoplasmic reticulum membrane. It localises to the cell membrane. The catalysed reaction is N-(9Z,12Z-octadecadienoyl)-ethanolamine + H2O = ethanolamine + (9Z,12Z)-octadecadienoate. Its function is as follows. Catalyzes the hydrolysis of bioactive endogenous fatty acid amides to their corresponding acids. The hydrolysis of endogenous amidated lipids terminates their participation as lipid mediators in various signaling systems. Converts a wide range of N-acylethanolamines (NAEs) to their corresponding free fatty acids and ethanolamine. This is Fatty acid amide hydrolase from Medicago truncatula (Barrel medic).